The sequence spans 188 residues: Translation machinery-associated protein 22 (188 aa).

Residues 96 to 167 (VVIKRIERSK…GVEELITQML (72 aa)) form the SUI1 domain.

The protein belongs to the DENR family. In terms of assembly, interacts with the 40S ribosomal subunit.

It localises to the cytoplasm. This is Translation machinery-associated protein 22 (TMA22) from Yarrowia lipolytica (strain CLIB 122 / E 150) (Yeast).